Reading from the N-terminus, the 689-residue chain is Methionine--tRNA ligase (689 aa).

Residues 16–26 (PYANAGLHLGH) carry the 'HIGH' region motif. Residues C147, C150, C160, and C163 each contribute to the Zn(2+) site. The 'KMSKS' region motif lies at 342 to 346 (KMSKS). K345 lines the ATP pocket. The 105-residue stretch at 585 to 689 (DFAKVDLRVG…AGVKPGMRVG (105 aa)) folds into the tRNA-binding domain.

Belongs to the class-I aminoacyl-tRNA synthetase family. MetG type 1 subfamily. In terms of assembly, homodimer. Zn(2+) is required as a cofactor.

Its subcellular location is the cytoplasm. The catalysed reaction is tRNA(Met) + L-methionine + ATP = L-methionyl-tRNA(Met) + AMP + diphosphate. Functionally, is required not only for elongation of protein synthesis but also for the initiation of all mRNA translation through initiator tRNA(fMet) aminoacylation. The protein is Methionine--tRNA ligase of Chromobacterium violaceum (strain ATCC 12472 / DSM 30191 / JCM 1249 / CCUG 213 / NBRC 12614 / NCIMB 9131 / NCTC 9757 / MK).